A 201-amino-acid polypeptide reads, in one-letter code: Desiccation-related protein PCC3-06 (201 aa).

A compositionally biased stretch (polar residues) spans 41–54; it reads TVASQSQGRQQVSE. Disordered stretches follow at residues 41–155 and 177–201; these read TVAS…QNVK and MGKS…TNYF. Basic and acidic residues-rich tracts occupy residues 57-76, 108-144, and 177-193; these read EDAK…KTSE, GELK…ERVA, and MGKS…ETKK.

The protein belongs to the LEA type 1 family.

The polypeptide is Desiccation-related protein PCC3-06 (Craterostigma plantagineum (Blue gem)).